Here is a 468-residue protein sequence, read N- to C-terminus: UDP-N-acetylmuramoyl-L-alanine--L-glutamate ligase (468 aa).

122–128 (GTKGKST) is a binding site for ATP.

Belongs to the MurCDEF family. MurD2 subfamily.

The protein localises to the cytoplasm. It catalyses the reaction UDP-N-acetyl-alpha-D-muramoyl-L-alanine + L-glutamate + ATP = UDP-N-acetyl-alpha-D-muramoyl-L-alanyl-L-glutamate + ADP + phosphate + H(+). It participates in cell wall biogenesis; peptidoglycan biosynthesis. Its function is as follows. Cell wall formation. Catalyzes the addition of L-glutamate to the nucleotide precursor UDP-N-acetylmuramoyl-L-alanine. The protein is UDP-N-acetylmuramoyl-L-alanine--L-glutamate ligase of Xylella fastidiosa (strain 9a5c).